A 247-amino-acid polypeptide reads, in one-letter code: Triosephosphate isomerase (247 aa).

Residue 9 to 11 (NWK) coordinates substrate. The Electrophile role is filled by H94. Residue E166 is the Proton acceptor of the active site. Substrate contacts are provided by residues G172, S211, and 232 to 233 (GG).

Belongs to the triosephosphate isomerase family. As to quaternary structure, homodimer.

The protein resides in the cytoplasm. It carries out the reaction D-glyceraldehyde 3-phosphate = dihydroxyacetone phosphate. It functions in the pathway carbohydrate biosynthesis; gluconeogenesis. The protein operates within carbohydrate degradation; glycolysis; D-glyceraldehyde 3-phosphate from glycerone phosphate: step 1/1. Involved in the gluconeogenesis. Catalyzes stereospecifically the conversion of dihydroxyacetone phosphate (DHAP) to D-glyceraldehyde-3-phosphate (G3P). This chain is Triosephosphate isomerase, found in Cupriavidus taiwanensis (strain DSM 17343 / BCRC 17206 / CCUG 44338 / CIP 107171 / LMG 19424 / R1) (Ralstonia taiwanensis (strain LMG 19424)).